Reading from the N-terminus, the 205-residue chain is Large ribosomal subunit protein uL13 (205 aa).

It belongs to the universal ribosomal protein uL13 family.

The chain is Large ribosomal subunit protein uL13 (RpL13A) from Drosophila melanogaster (Fruit fly).